We begin with the raw amino-acid sequence, 216 residues long: Small ribosomal subunit protein uS3c (216 aa).

One can recognise a KH type-2 domain in the interval 43–118 (IKNYIQKNRR…RLKIAITRVE (76 aa)).

Belongs to the universal ribosomal protein uS3 family. Part of the 30S ribosomal subunit.

Its subcellular location is the plastid. The protein localises to the chloroplast. The protein is Small ribosomal subunit protein uS3c (rps3) of Dioscorea elephantipes (Elephant's foot yam).